Here is a 736-residue protein sequence, read N- to C-terminus: Gingipain R2 (736 aa).

A signal peptide spans 1 to 24 (MKKNFSRIVSIVAFSSLLGGMAFA). The propeptide occupies 25–229 (QPAERGRNPQ…SVFMNYEATR (205 aa)). Ca(2+) contacts are provided by aspartate 307, valine 329, aspartate 332, tyrosine 334, glutamate 336, glutamate 390, and histidine 395. Catalysis depends on histidine 440, which acts as the Proton donor. Cysteine 473 (nucleophile) is an active-site residue. 8 residues coordinate Ca(2+): phenylalanine 478, glutamate 487, aspartate 521, glutamate 522, glutamate 525, histidine 531, aspartate 613, and glutamate 639.

This sequence belongs to the peptidase C25 family.

It is found in the secreted. It carries out the reaction Hydrolysis of proteins and small molecule substrates, with a preference for Arg in P1.. Its activity is regulated as follows. Inhibited by human histatin-3 1/24 (histatin-5). In terms of biological role, thiol protease. Acts synergistically with RgpA to catalyze the maturation of fimbrial subunits, such as FimA. Its proteolytic activity is a major factor in both periodontal tissue destruction and in evasion of host defense mechanisms. The protein is Gingipain R2 (rgpB) of Porphyromonas gingivalis (strain ATCC BAA-308 / W83).